Here is a 185-residue protein sequence, read N- to C-terminus: Ribosome-recycling factor (185 aa).

It belongs to the RRF family.

It localises to the cytoplasm. Its function is as follows. Responsible for the release of ribosomes from messenger RNA at the termination of protein biosynthesis. May increase the efficiency of translation by recycling ribosomes from one round of translation to another. The polypeptide is Ribosome-recycling factor (Alcanivorax borkumensis (strain ATCC 700651 / DSM 11573 / NCIMB 13689 / SK2)).